The following is a 144-amino-acid chain: 3-dehydroquinate dehydratase (144 aa).

Tyrosine 22 acts as the Proton acceptor in catalysis. 3 residues coordinate substrate: asparagine 73, histidine 79, and aspartate 86. Histidine 99 (proton donor) is an active-site residue. Substrate is bound by residues 100–101 (LS) and arginine 110.

It belongs to the type-II 3-dehydroquinase family. In terms of assembly, homododecamer.

It carries out the reaction 3-dehydroquinate = 3-dehydroshikimate + H2O. The protein operates within metabolic intermediate biosynthesis; chorismate biosynthesis; chorismate from D-erythrose 4-phosphate and phosphoenolpyruvate: step 3/7. Functionally, catalyzes a trans-dehydration via an enolate intermediate. The protein is 3-dehydroquinate dehydratase of Pelotomaculum thermopropionicum (strain DSM 13744 / JCM 10971 / SI).